Reading from the N-terminus, the 352-residue chain is Protein RecA (352 aa).

66-73 is a binding site for ATP; it reads GPESSGKT.

This sequence belongs to the RecA family.

Its subcellular location is the cytoplasm. Can catalyze the hydrolysis of ATP in the presence of single-stranded DNA, the ATP-dependent uptake of single-stranded DNA by duplex DNA, and the ATP-dependent hybridization of homologous single-stranded DNAs. It interacts with LexA causing its activation and leading to its autocatalytic cleavage. The sequence is that of Protein RecA from Psychrobacter arcticus (strain DSM 17307 / VKM B-2377 / 273-4).